A 450-amino-acid polypeptide reads, in one-letter code: Phosphoglucosamine mutase (450 aa).

Catalysis depends on serine 101, which acts as the Phosphoserine intermediate. 4 residues coordinate Mg(2+): serine 101, aspartate 240, aspartate 242, and aspartate 244. The residue at position 101 (serine 101) is a Phosphoserine.

Belongs to the phosphohexose mutase family. It depends on Mg(2+) as a cofactor. Post-translationally, activated by phosphorylation.

It catalyses the reaction alpha-D-glucosamine 1-phosphate = D-glucosamine 6-phosphate. In terms of biological role, catalyzes the conversion of glucosamine-6-phosphate to glucosamine-1-phosphate. This is Phosphoglucosamine mutase from Streptococcus pneumoniae serotype 4 (strain ATCC BAA-334 / TIGR4).